A 30-amino-acid chain; its full sequence is Circulin A (30 aa).

The cyclopeptide (Gly-Asn) cross-link spans 1–30 (GIPCGESCVWIPCISAALGCSCKNKVCYRN). Disulfide bonds link cysteine 4/cysteine 20, cysteine 8/cysteine 22, and cysteine 13/cysteine 27.

In terms of processing, this is a cyclic peptide. Expressed in fruit, pedicel, root and stem but not in leaf (at protein level).

Probably participates in a plant defense mechanism. This chain is Circulin A, found in Chassalia chartacea (Chassalia curviflora).